Reading from the N-terminus, the 194-residue chain is Imidazoleglycerol-phosphate dehydratase (194 aa).

It belongs to the imidazoleglycerol-phosphate dehydratase family.

Its subcellular location is the cytoplasm. The enzyme catalyses D-erythro-1-(imidazol-4-yl)glycerol 3-phosphate = 3-(imidazol-4-yl)-2-oxopropyl phosphate + H2O. It participates in amino-acid biosynthesis; L-histidine biosynthesis; L-histidine from 5-phospho-alpha-D-ribose 1-diphosphate: step 6/9. The protein is Imidazoleglycerol-phosphate dehydratase of Thermoanaerobacter pseudethanolicus (strain ATCC 33223 / 39E) (Clostridium thermohydrosulfuricum).